A 213-amino-acid chain; its full sequence is Large ribosomal subunit protein uL3 (213 aa).

Belongs to the universal ribosomal protein uL3 family. As to quaternary structure, part of the 50S ribosomal subunit. Forms a cluster with proteins L14 and L19.

Functionally, one of the primary rRNA binding proteins, it binds directly near the 3'-end of the 23S rRNA, where it nucleates assembly of the 50S subunit. In Desulforudis audaxviator (strain MP104C), this protein is Large ribosomal subunit protein uL3.